The chain runs to 395 residues: uncharacterized protein (395 aa).

Transmembrane regions (helical) follow at residues 42–62, 67–87, 97–117, 128–148, 196–216, 241–261, and 281–301; these read LKYV…LIFI, LYSF…FVLL, LIFN…LIIF, ILST…SIIP, FIYA…LYIL, ILFY…SFVA, and LFFS…GTVV.

The protein localises to the cell membrane. This is an uncharacterized protein from Mycoplasma genitalium (strain ATCC 33530 / DSM 19775 / NCTC 10195 / G37) (Mycoplasmoides genitalium).